Reading from the N-terminus, the 132-residue chain is MKAKDLLGRHGEDLAVGYLETLGMLIVERNWRCSEGEIDVVALDGDALVIAEVKTRRSLDYGHPFEAVGPDKLARLHRLGAAWCRDRELRMPLRRVDVIAVVDDGGGSPVVEHLKGVAEWRSDAPILWRSWA.

Belongs to the UPF0102 family.

The protein is UPF0102 protein Achl_2213 of Pseudarthrobacter chlorophenolicus (strain ATCC 700700 / DSM 12829 / CIP 107037 / JCM 12360 / KCTC 9906 / NCIMB 13794 / A6) (Arthrobacter chlorophenolicus).